A 46-amino-acid chain; its full sequence is Esculentin-1 (46 aa).

Cys40 and Cys46 form a disulfide bridge.

In terms of tissue distribution, expressed by the skin glands.

The protein resides in the secreted. Antimicrobial peptide. Stimulates insulin release by BRIN-BD11 cells in vitro. This Pelophylax saharicus (Sahara frog) protein is Esculentin-1.